The primary structure comprises 364 residues: MPRGRCRQQGPRIPIWAAANYANAHPWQQMDKASPGVAYTPLVDPWIERPCCGDTVCVRTTMEQKSTASGTCGGKPAERGPLAGHMPSSRPHRVDFCWVPGSDPGTFDGSPWLLDRFLAQLGDYMSFHFEHYQDNISRVCEILRRLTGRAQAWAAPYLDGDLPLPDDYELFCQDLKEVVQDPNSFAEYHAVVTCPLPLASSQLPVAPQLPVVRQYLARFLEGLALDMGTAPRSLPAAMATPAVSGSNSVSRSALFEQQLTKESTPGPKEPPVLPSSTCSSKPGPVEPASSQPEEAAPTPVPRLSESANPPAQRPDPAHPGGPKPQKTEEEVLETEGDQEVSLGTPQEVVEAPETPGEPPLSPGF.

Residues 66–88 form a disordered region; the sequence is STASGTCGGKPAERGPLAGHMPS. A BH3 motif is present at residues 114–128; sequence LDRFLAQLGDYMSFH. The tract at residues 258–364 is disordered; that stretch reads QLTKESTPGP…PGEPPLSPGF (107 aa). 2 stretches are compositionally biased toward pro residues: residues 311 to 322 and 355 to 364; these read AQRPDPAHPGGP and PGEPPLSPGF.

Interacts (via BH3 domain) with VDAC1. Interacts with pro-survival Bcl-2 family members, BCL2, BCL2L1 isoform Bcl-X(L), MCL1, BCL2A1 and BCL2L2. Interacts with BAX and BAK1. Ubiquitously expressed.

It is found in the mitochondrion. Its function is as follows. Could induce apoptosis in a BH3 domain-dependent manner. The direct interaction network of Bcl-2 family members may play a key role in modulation RTL10/BOP intrinsic apoptotic signaling activity. This is Protein Bop from Homo sapiens (Human).